The chain runs to 506 residues: 2,3-bisphosphoglycerate-independent phosphoglycerate mutase (506 aa).

Residues Asp-13 and Ser-63 each contribute to the Mn(2+) site. Ser-63 serves as the catalytic Phosphoserine intermediate. Residues His-124, 153–154, Arg-183, Arg-189, 254–257, and Lys-330 contribute to the substrate site; these read RD and RADR. Residues Asp-396, His-400, Asp-437, His-438, and His-456 each coordinate Mn(2+).

It belongs to the BPG-independent phosphoglycerate mutase family. In terms of assembly, monomer. Mn(2+) is required as a cofactor.

It carries out the reaction (2R)-2-phosphoglycerate = (2R)-3-phosphoglycerate. It participates in carbohydrate degradation; glycolysis; pyruvate from D-glyceraldehyde 3-phosphate: step 3/5. Its function is as follows. Catalyzes the interconversion of 2-phosphoglycerate and 3-phosphoglycerate. The sequence is that of 2,3-bisphosphoglycerate-independent phosphoglycerate mutase from Cereibacter sphaeroides (strain ATCC 17025 / ATH 2.4.3) (Rhodobacter sphaeroides).